The chain runs to 379 residues: Chaperone protein DnaJ (379 aa).

Residues 5–70 enclose the J domain; it reads DYYEILGVSK…QKRAAYDQYG (66 aa). The segment at 134-212 adopts a CR-type zinc-finger fold; the sequence is GVTKEIRIPT…CHGHGRVEKS (79 aa). Zn(2+) is bound by residues Cys-147, Cys-150, Cys-164, Cys-167, Cys-186, Cys-189, Cys-200, and Cys-203. CXXCXGXG motif repeat units follow at residues 147-154, 164-171, 186-193, and 200-207; these read CDVCHGSG, CPTCHGSG, CPHCQGRG, and CHKCHGHG.

Belongs to the DnaJ family. Homodimer. The cofactor is Zn(2+).

The protein localises to the cytoplasm. Functionally, participates actively in the response to hyperosmotic and heat shock by preventing the aggregation of stress-denatured proteins and by disaggregating proteins, also in an autonomous, DnaK-independent fashion. Unfolded proteins bind initially to DnaJ; upon interaction with the DnaJ-bound protein, DnaK hydrolyzes its bound ATP, resulting in the formation of a stable complex. GrpE releases ADP from DnaK; ATP binding to DnaK triggers the release of the substrate protein, thus completing the reaction cycle. Several rounds of ATP-dependent interactions between DnaJ, DnaK and GrpE are required for fully efficient folding. Also involved, together with DnaK and GrpE, in the DNA replication of plasmids through activation of initiation proteins. The chain is Chaperone protein DnaJ from Salmonella agona (strain SL483).